Consider the following 100-residue polypeptide: Small ribosomal subunit protein uS14 (100 aa).

It belongs to the universal ribosomal protein uS14 family. In terms of assembly, part of the 30S ribosomal subunit. Contacts proteins S3 and S10.

Its function is as follows. Binds 16S rRNA, required for the assembly of 30S particles and may also be responsible for determining the conformation of the 16S rRNA at the A site. The sequence is that of Small ribosomal subunit protein uS14 from Prochlorococcus marinus (strain MIT 9313).